The following is a 476-amino-acid chain: Aspartyl/glutamyl-tRNA(Asn/Gln) amidotransferase subunit B (476 aa).

It belongs to the GatB/GatE family. GatB subfamily. Heterotrimer of A, B and C subunits.

It catalyses the reaction L-glutamyl-tRNA(Gln) + L-glutamine + ATP + H2O = L-glutaminyl-tRNA(Gln) + L-glutamate + ADP + phosphate + H(+). The enzyme catalyses L-aspartyl-tRNA(Asn) + L-glutamine + ATP + H2O = L-asparaginyl-tRNA(Asn) + L-glutamate + ADP + phosphate + 2 H(+). Functionally, allows the formation of correctly charged Asn-tRNA(Asn) or Gln-tRNA(Gln) through the transamidation of misacylated Asp-tRNA(Asn) or Glu-tRNA(Gln) in organisms which lack either or both of asparaginyl-tRNA or glutaminyl-tRNA synthetases. The reaction takes place in the presence of glutamine and ATP through an activated phospho-Asp-tRNA(Asn) or phospho-Glu-tRNA(Gln). The protein is Aspartyl/glutamyl-tRNA(Asn/Gln) amidotransferase subunit B of Lactobacillus delbrueckii subsp. bulgaricus (strain ATCC 11842 / DSM 20081 / BCRC 10696 / JCM 1002 / NBRC 13953 / NCIMB 11778 / NCTC 12712 / WDCM 00102 / Lb 14).